The sequence spans 581 residues: Terpene synthase 2, chloroplastic (581 aa).

The N-terminal 34 residues, 1–34, are a transit peptide targeting the chloroplast; it reads MYSLPGATMSAAPASIISSSSFVEPLLLAAASPA. Arginine 299, aspartate 336, aspartate 340, and arginine 480 together coordinate substrate. Mg(2+)-binding residues include aspartate 336 and aspartate 340. Positions 336-340 match the DDXXD motif motif; that stretch reads DDIFD. The Mg(2+) site is built by aspartate 483, serine 487, and glutamate 491.

The protein belongs to the terpene synthase family. Monomer. Mg(2+) serves as cofactor.

The protein localises to the plastid. It is found in the chloroplast. It catalyses the reaction (2E,6E)-farnesyl diphosphate + H2O = (3S,6E)-nerolidol + diphosphate. It carries out the reaction (2E,6E,10E)-geranylgeranyl diphosphate + H2O = (6E,10E)-geranyllinalool + diphosphate. The enzyme catalyses (2E)-geranyl diphosphate + H2O = (S)-linalool + diphosphate. Its pathway is secondary metabolite biosynthesis; terpenoid biosynthesis. Involved in sesquiterpene (C15), diterpene (C20) and monoterpene (C10) biosynthesis. Has sesquiterpene synthase activity, converting farnesyl diphosphate to nerolidol, the precursor of the volatile C11-homoterpene (E)-3,8-dimethyl-1,4,7-nonatriene (DMNT). Has diterpene synthase activity, converting geranylgeranyl diphosphate to (E,E)-geranyllinalool, the precursor of the volatile C16-homoterpene (E,E)-4,8,12-trimethyltrideca 1,3,7,11-tetraene (TMTT). Has monoterpene synthase activity, converting geranyl diphosphate into linalool. Forms only the S-isomers of the three tertiary terpene alcohols. The chain is Terpene synthase 2, chloroplastic from Zea mays (Maize).